A 304-amino-acid chain; its full sequence is N-acetyl-D-glucosamine kinase (304 aa).

ATP is bound by residues 4–11 (GFDIGGTK) and 133–140 (GFGGGLIF). Residues histidine 157, cysteine 178, cysteine 180, and cysteine 185 each contribute to the Zn(2+) site.

The protein belongs to the ROK (NagC/XylR) family. NagK subfamily.

It carries out the reaction N-acetyl-D-glucosamine + ATP = N-acetyl-D-glucosamine 6-phosphate + ADP + H(+). It participates in cell wall biogenesis; peptidoglycan recycling. Functionally, catalyzes the phosphorylation of N-acetyl-D-glucosamine (GlcNAc) derived from cell-wall degradation, yielding GlcNAc-6-P. The sequence is that of N-acetyl-D-glucosamine kinase from Pasteurella multocida (strain Pm70).